Consider the following 339-residue polypeptide: Fructose-1,6-bisphosphatase isozyme 2 (339 aa).

The tract at residues 3–10 (DRSPFETD) is important for interaction with ALDOA. AMP-binding positions include V18 and 28 to 32 (TGELT). Mg(2+) is bound by residues D69 and E98. 113–114 (KY) is a binding site for AMP. The Mg(2+) site is built by D119, L121, and D122. D122 serves as a coordination point for substrate. R141 contacts AMP. Residues 204–208 (KKKGK) carry the Nuclear localization signal motif. Substrate is bound at residue 213 to 216 (NEGY). Phosphotyrosine occurs at positions 216 and 219. Substrate contacts are provided by residues 245–249 (YVGSM), Y265, and K275. Residue E281 participates in Mg(2+) binding.

It belongs to the FBPase class 1 family. In terms of assembly, homotetramer. Interacts with ALDOA; the interaction blocks inhibition by physiological concentrations of AMP and reduces inhibition by Ca(2+). Interacts with alpha-actinin and F-actin. The cofactor is Mg(2+).

It localises to the cell junction. The protein localises to the cytoplasm. It is found in the nucleus. The protein resides in the myofibril. Its subcellular location is the sarcomere. It localises to the z line. It carries out the reaction beta-D-fructose 1,6-bisphosphate + H2O = beta-D-fructose 6-phosphate + phosphate. Its pathway is carbohydrate biosynthesis; gluconeogenesis. With respect to regulation, subject to complex allosteric regulation. The enzyme can assume an active R-state, or an inactive T-state. Intermediate conformations may exist. AMP acts as an allosteric inhibitor. Fructose 2,6-bisphosphate acts as a competitive inhibitor. Strongly inhibited by Ca(2+). Catalyzes the hydrolysis of fructose 1,6-bisphosphate to fructose 6-phosphate in the presence of divalent cations and probably participates in glycogen synthesis from carbohydrate precursors, such as lactate. The chain is Fructose-1,6-bisphosphatase isozyme 2 (Fbp2) from Rattus norvegicus (Rat).